A 344-amino-acid polypeptide reads, in one-letter code: Arginine N-succinyltransferase (344 aa).

L125 is a succinyl-CoA binding site. H229 (proton donor) is an active-site residue.

This sequence belongs to the arginine N-succinyltransferase family.

The enzyme catalyses succinyl-CoA + L-arginine = N(2)-succinyl-L-arginine + CoA + H(+). The protein operates within amino-acid degradation; L-arginine degradation via AST pathway; L-glutamate and succinate from L-arginine: step 1/5. Catalyzes the transfer of succinyl-CoA to arginine to produce N(2)-succinylarginine. In Salmonella typhi, this protein is Arginine N-succinyltransferase.